The primary structure comprises 479 residues: MTDAKRAQALDLSLANKVADMALADFGHKEMQLSEREVPGLMELIRMYGVSKPLKGLRVTGSLHMTIQTAMLIKTLYELGADIRWASCNIFSTQDHAAAAIADSGMAKVFAWKGETLEDYWWCTEMALTWPDGSGPDLLVDDGGDATLMIHKGVEVENNPELLKQAYDNKEFQIIMDRLALAYQNDPGRWQRVAARVRGVSEETTTGVHRLYQLEQEGKLLFPAINVNDSVTKSKFDNLYGCRESLADGIKRATDVMVAGKVVVVAGYGDVGKGCAQSMRGFGARVLVTEIDPICALQAAMEGYEVTTMEKAVEEGDIFVTATGNYKVITGEHMEAMKDEAIVCNIGHFDNEIDMHYLETTPGCTCLNIKPQVDKWTLKSGRSIIVLAEGRLVNLGCATGHPSFVMSNSFTNQTLAQIELATNPDLERKVYILPKKLDEQVARLHLARLGVTLTTLTKEQADYIGVPVDGPYKPGHYRY.

Substrate is bound by residues T66, D142, and E203. 204-206 is a binding site for NAD(+); it reads TTT. The substrate site is built by K233 and D237. Residues N238, 267–272, E290, N325, 346–348, and N394 contribute to the NAD(+) site; these read GYGDVG and IGH.

This sequence belongs to the adenosylhomocysteinase family. Requires NAD(+) as cofactor.

Its subcellular location is the cytoplasm. It catalyses the reaction S-adenosyl-L-homocysteine + H2O = L-homocysteine + adenosine. It functions in the pathway amino-acid biosynthesis; L-homocysteine biosynthesis; L-homocysteine from S-adenosyl-L-homocysteine: step 1/1. Functionally, may play a key role in the regulation of the intracellular concentration of adenosylhomocysteine. This is Adenosylhomocysteinase from Nitratidesulfovibrio vulgaris (strain DSM 19637 / Miyazaki F) (Desulfovibrio vulgaris).